The primary structure comprises 327 residues: Serine/threonine-protein phosphatase PP1-beta catalytic subunit (327 aa).

Ala-2 carries the N-acetylalanine modification. Mn(2+)-binding residues include Asp-63, His-65, Asp-91, and Asn-123. The active-site Proton donor is His-124. His-172 and His-247 together coordinate Mn(2+). The segment at Gln-305–Arg-327 is disordered. Thr-316 is modified (phosphothreonine).

This sequence belongs to the PPP phosphatase family. PP-1 subfamily. In terms of assembly, PP1 comprises a catalytic subunit, PPP1CA, PPP1CB or PPP1CC, which is folded into its native form by inhibitor 2 and glycogen synthetase kinase 3, and then complexed to one or several targeting or regulatory subunits. The targeting or regulatory subunits determine the substrate specificity of PP1. PPP1R12A, PPP1R12B and PPP1R12C mediate binding to myosin. PPP1R3A (in skeletal muscle), PPP1R3B (in liver), PPP1R3C, PPP1R3D and PPP1R3F (in brain) mediate binding to glycogen. PPP1R15A and PPP1R15B mediate binding to EIF2S1. Part of a complex containing PPP1R15B, PP1 and NCK1/2. Interacts with PPP1R7 and PPP1R12C. Interacts with PPP1R16B. Component of the PTW/PP1 phosphatase complex, composed of PPP1R10/PNUTS, TOX4, WDR82, and PPP1CA or PPP1CB or PPP1CC. Interacts with PPP1R8. Interacts with PPP1R12A and NUAK1; the interaction is direct. Interacts with TRIM28; the interaction is weak. Interacts with FOXP3. Interacts with RRP1B. Interacts with SERPINE1. Interacts with LZTR1. Component of the SHOC2-MRAS-PP1c (SMP) complex consisting of SHOC2, GTP-bound M-Ras/MRAS and the catalytic subunit of protein phosphatase 1 (either PPP1CA, PPP1CB or PPP1CC). SHOC2 and PP1c preferably bind M-Ras/MRAS, but they also bind K-Ras/KRAS, N-Ras/NRAS and H-Ras/HRAS; these interactions are GTP-dependent and both SHOC2 and PP1c are required to form a stable complex. Interacts with SHOC2 in the absence of Ras GTPases. Requires Mn(2+) as cofactor.

The protein localises to the cytoplasm. It is found in the nucleus. Its subcellular location is the nucleoplasm. The protein resides in the nucleolus. The enzyme catalyses O-phospho-L-seryl-[protein] + H2O = L-seryl-[protein] + phosphate. It carries out the reaction O-phospho-L-threonyl-[protein] + H2O = L-threonyl-[protein] + phosphate. It catalyses the reaction O-phospho-L-seryl-[myosin light chain] + H2O = L-seryl-[myosin light chain] + phosphate. The catalysed reaction is O-phospho-L-threonyl-[myosin light chain] + H2O = L-threonyl-[myosin light chain] + phosphate. Inhibited by the toxins okadaic acid, tautomycin and microcystin Leu-Arg. The phosphatase activity of the PPP1R15A-PP1 complex toward EIF2S1 is specifically inhibited by Salubrinal, a drug that protects cells from endoplasmic reticulum stress. In terms of biological role, protein phosphatase that associates with over 200 regulatory proteins to form highly specific holoenzymes which dephosphorylate hundreds of biological targets. Protein phosphatase (PP1) is essential for cell division, it participates in the regulation of glycogen metabolism, muscle contractility and protein synthesis. Involved in regulation of ionic conductances and long-term synaptic plasticity. Component of the PTW/PP1 phosphatase complex, which plays a role in the control of chromatin structure and cell cycle progression during the transition from mitosis into interphase. In balance with CSNK1D and CSNK1E, determines the circadian period length, through the regulation of the speed and rhythmicity of PER1 and PER2 phosphorylation. May dephosphorylate CSNK1D and CSNK1E. Core component of the SHOC2-MRAS-PP1c (SMP) holophosphatase complex that regulates the MAPK pathway activation. The SMP complex specifically dephosphorylates the inhibitory phosphorylation at 'Ser-259' of RAF1 kinase, 'Ser-365' of BRAF kinase and 'Ser-214' of ARAF kinase, stimulating their kinase activities. The SMP complex enhances the dephosphorylation activity and substrate specificity of PP1c. This Bos taurus (Bovine) protein is Serine/threonine-protein phosphatase PP1-beta catalytic subunit (PPP1CB).